The sequence spans 468 residues: ATP synthase subunit beta (468 aa).

Residue 155–162 (GGAGVGKT) participates in ATP binding.

It belongs to the ATPase alpha/beta chains family. F-type ATPases have 2 components, CF(1) - the catalytic core - and CF(0) - the membrane proton channel. CF(1) has five subunits: alpha(3), beta(3), gamma(1), delta(1), epsilon(1). CF(0) has three main subunits: a(1), b(2) and c(9-12). The alpha and beta chains form an alternating ring which encloses part of the gamma chain. CF(1) is attached to CF(0) by a central stalk formed by the gamma and epsilon chains, while a peripheral stalk is formed by the delta and b chains.

The protein resides in the cell membrane. The catalysed reaction is ATP + H2O + 4 H(+)(in) = ADP + phosphate + 5 H(+)(out). Functionally, produces ATP from ADP in the presence of a proton gradient across the membrane. The catalytic sites are hosted primarily by the beta subunits. This chain is ATP synthase subunit beta, found in Streptococcus gordonii (strain Challis / ATCC 35105 / BCRC 15272 / CH1 / DL1 / V288).